We begin with the raw amino-acid sequence, 59 residues long: uncharacterized protein (59 aa).

The helical transmembrane segment at 7–27 (LLLLVAIALISAFALTVTGVV) threads the bilayer.

The protein localises to the membrane. This is an uncharacterized protein from Pyrobaculum aerophilum (strain ATCC 51768 / DSM 7523 / JCM 9630 / CIP 104966 / NBRC 100827 / IM2).